The chain runs to 560 residues: Membrane protein insertase YidC (560 aa).

A run of 6 helical transmembrane segments spans residues isoleucine 5–phenylalanine 25, alanine 334–phenylalanine 354, tyrosine 357–phenylalanine 377, leucine 431–isoleucine 451, leucine 476–leucine 496, and phenylalanine 522–tryptophan 542.

It belongs to the OXA1/ALB3/YidC family. Type 1 subfamily. Interacts with the Sec translocase complex via SecD. Specifically interacts with transmembrane segments of nascent integral membrane proteins during membrane integration.

The protein resides in the cell inner membrane. Functionally, required for the insertion and/or proper folding and/or complex formation of integral membrane proteins into the membrane. Involved in integration of membrane proteins that insert both dependently and independently of the Sec translocase complex, as well as at least some lipoproteins. Aids folding of multispanning membrane proteins. The protein is Membrane protein insertase YidC of Rickettsia africae (strain ESF-5).